Consider the following 90-residue polypeptide: Small ribosomal subunit protein bS20 (90 aa).

This sequence belongs to the bacterial ribosomal protein bS20 family.

Functionally, binds directly to 16S ribosomal RNA. The protein is Small ribosomal subunit protein bS20 of Francisella tularensis subsp. holarctica (strain FTNF002-00 / FTA).